The primary structure comprises 162 residues: 3-dehydroquinate dehydratase (162 aa).

Residue Y22 is the Proton acceptor of the active site. Residues N73, H79, and D86 each contribute to the substrate site. H99 serves as the catalytic Proton donor. Substrate is bound by residues 100 to 101 (LS) and R110.

This sequence belongs to the type-II 3-dehydroquinase family. In terms of assembly, homododecamer.

It carries out the reaction 3-dehydroquinate = 3-dehydroshikimate + H2O. The protein operates within metabolic intermediate biosynthesis; chorismate biosynthesis; chorismate from D-erythrose 4-phosphate and phosphoenolpyruvate: step 3/7. In terms of biological role, catalyzes a trans-dehydration via an enolate intermediate. This chain is 3-dehydroquinate dehydratase, found in Sulfurovum sp. (strain NBC37-1).